The chain runs to 181 residues: MENTQENPASQSAEENGSETQAAQDAAPAAEAADAALAEAQAKVAELQESYLRAKAETENVRRRAQEDVAKAHKFAIESFAEHLLPVLDSLEAAVGDTSGDIAKVREGVELTLRQLTSALEKGRVVAINPVGEKFDPHRHQAISMVPADQEPNTVVTVLQKGYTIADRVLRPALVTVAQPK.

The segment covering 1–20 has biased composition (polar residues); that stretch reads MENTQENPASQSAEENGSET. The disordered stretch occupies residues 1 to 39; it reads MENTQENPASQSAEENGSETQAAQDAAPAAEAADAALAE. Over residues 21-39 the composition is skewed to low complexity; that stretch reads QAAQDAAPAAEAADAALAE.

Belongs to the GrpE family. In terms of assembly, homodimer.

It localises to the cytoplasm. Functionally, participates actively in the response to hyperosmotic and heat shock by preventing the aggregation of stress-denatured proteins, in association with DnaK and GrpE. It is the nucleotide exchange factor for DnaK and may function as a thermosensor. Unfolded proteins bind initially to DnaJ; upon interaction with the DnaJ-bound protein, DnaK hydrolyzes its bound ATP, resulting in the formation of a stable complex. GrpE releases ADP from DnaK; ATP binding to DnaK triggers the release of the substrate protein, thus completing the reaction cycle. Several rounds of ATP-dependent interactions between DnaJ, DnaK and GrpE are required for fully efficient folding. This is Protein GrpE from Burkholderia multivorans (strain ATCC 17616 / 249).